A 184-amino-acid chain; its full sequence is Endoribonuclease YbeY (184 aa).

Composition is skewed to acidic residues over residues Met-1–Pro-11 and Asp-19–Asp-29. The disordered stretch occupies residues Met-1–Leu-37. Residues His-146, His-150, and His-156 each contribute to the Zn(2+) site.

This sequence belongs to the endoribonuclease YbeY family. Zn(2+) serves as cofactor.

It is found in the cytoplasm. In terms of biological role, single strand-specific metallo-endoribonuclease involved in late-stage 70S ribosome quality control and in maturation of the 3' terminus of the 16S rRNA. The polypeptide is Endoribonuclease YbeY (Burkholderia mallei (strain ATCC 23344)).